Here is a 205-residue protein sequence, read N- to C-terminus: Photosystem I assembly protein Ycf4 (205 aa).

2 helical membrane passes run 23 to 43 (WATV…SSYI) and 86 to 106 (LMCF…CLIF).

Belongs to the Ycf4 family.

The protein resides in the plastid. The protein localises to the chloroplast thylakoid membrane. Its function is as follows. Seems to be required for the assembly of the photosystem I complex. This is Photosystem I assembly protein Ycf4 from Tetradesmus obliquus (Green alga).